Consider the following 483-residue polypeptide: Islet cell autoantigen 1 (483 aa).

The AH domain occupies 51 to 254 (ASDADLDAKL…TSHTMAAIHE (204 aa)). The interval 281 to 321 (EEKKKINQQESTDAAVQEPSQLISLEEENQRKESSSFKTED) is disordered. Over residues 288–303 (QQESTDAAVQEPSQLI) the composition is skewed to polar residues. Positions 308 to 321 (ENQRKESSSFKTED) are enriched in basic and acidic residues.

Expressed abundantly in pancreas, heart and brain with low levels of expression in lung, kidney, liver and thyroid.

Its subcellular location is the cytoplasm. It is found in the cytosol. The protein localises to the golgi apparatus membrane. It localises to the cytoplasmic vesicle. The protein resides in the secretory vesicle membrane. Its subcellular location is the secretory vesicle. It is found in the synaptic vesicle membrane. Functionally, may play a role in neurotransmitter secretion. This Homo sapiens (Human) protein is Islet cell autoantigen 1 (ICA1).